A 251-amino-acid chain; its full sequence is MRDAETQGLVLYSRNYKEKDKLVKIFTESFGKRMFFVKNFGKSPYASSLQAFTDGKLTATINDGGFSFIEDVSEVVVYKNISADIFINAHASYIISLADAAISDNQYDPALYGFLKRSLELLDQGFDMEVVTNIFELQVLHRFGVSLNFSECAFCHKTVGPFDFSYKFSGCLCPRHFDEDLRRSHLDPNVIYLINLFQEISLDELKKISIKAEMKAKIRQFIDGLYDEYVGIHLKSKKFLDGMSGWADIMK.

The protein belongs to the RecO family.

Functionally, involved in DNA repair and RecF pathway recombination. The chain is DNA repair protein RecO from Lactococcus lactis subsp. cremoris (strain MG1363).